We begin with the raw amino-acid sequence, 179 residues long: Ubiquitin-conjugating enzyme E2 C (179 aa).

Residues 1–31 (MASQNVDPAAASSVASRKGQESGTSAARGSV) are disordered. Residues 30-179 (SVGKRLQQEL…YQKQVREKEI (150 aa)) enclose the UBC core domain. Cys114 acts as the Glycyl thioester intermediate in catalysis.

The protein belongs to the ubiquitin-conjugating enzyme family. In terms of assembly, component of the APC/C complex. Autoubiquitinated by the APC/C complex, leading to its degradation by the proteasome.

It carries out the reaction S-ubiquitinyl-[E1 ubiquitin-activating enzyme]-L-cysteine + [E2 ubiquitin-conjugating enzyme]-L-cysteine = [E1 ubiquitin-activating enzyme]-L-cysteine + S-ubiquitinyl-[E2 ubiquitin-conjugating enzyme]-L-cysteine.. It catalyses the reaction S-ubiquitinyl-[E1 ubiquitin-activating enzyme]-L-cysteine + [acceptor protein]-L-lysine = [E1 ubiquitin-activating enzyme]-L-cysteine + N(6)-monoubiquitinyl-[acceptor protein]-L-lysine.. Its pathway is protein modification; protein ubiquitination. Catalyzes the covalent attachment of ubiquitin to other proteins. Acts as an essential factor of the anaphase promoting complex/cyclosome (APC/C), a cell cycle-regulated ubiquitin ligase that controls progression through mitosis. Acts by initiating 'Lys-11'-linked polyubiquitin chains on APC/C substrates, leading to the degradation of APC/C substrates by the proteasome and promoting mitotic exit. The polypeptide is Ubiquitin-conjugating enzyme E2 C (ube2c) (Xenopus laevis (African clawed frog)).